The following is a 313-amino-acid chain: tRNA dimethylallyltransferase (313 aa).

Residue 17 to 24 (GPTASGKT) participates in ATP binding. A substrate-binding site is contributed by 19–24 (TASGKT). Interaction with substrate tRNA stretches follow at residues 42–45 (DSAL), 166–170 (QRLSR), and 247–252 (RCVGYR).

Belongs to the IPP transferase family. As to quaternary structure, monomer. Mg(2+) serves as cofactor.

It carries out the reaction adenosine(37) in tRNA + dimethylallyl diphosphate = N(6)-dimethylallyladenosine(37) in tRNA + diphosphate. Catalyzes the transfer of a dimethylallyl group onto the adenine at position 37 in tRNAs that read codons beginning with uridine, leading to the formation of N6-(dimethylallyl)adenosine (i(6)A). This is tRNA dimethylallyltransferase from Pectobacterium atrosepticum (strain SCRI 1043 / ATCC BAA-672) (Erwinia carotovora subsp. atroseptica).